We begin with the raw amino-acid sequence, 256 residues long: Acetyl-coenzyme A carboxylase carboxyl transferase subunit alpha (256 aa).

Residues 1–236 form the CoA carboxyltransferase C-terminal domain; that stretch reads MTDVSRVLKE…KANLIEQITS (236 aa).

Belongs to the AccA family. In terms of assembly, acetyl-CoA carboxylase is a heterohexamer composed of biotin carboxyl carrier protein (AccB), biotin carboxylase (AccC) and two subunits each of ACCase subunit alpha (AccA) and ACCase subunit beta (AccD).

It is found in the cytoplasm. It catalyses the reaction N(6)-carboxybiotinyl-L-lysyl-[protein] + acetyl-CoA = N(6)-biotinyl-L-lysyl-[protein] + malonyl-CoA. Its pathway is lipid metabolism; malonyl-CoA biosynthesis; malonyl-CoA from acetyl-CoA: step 1/1. Component of the acetyl coenzyme A carboxylase (ACC) complex. First, biotin carboxylase catalyzes the carboxylation of biotin on its carrier protein (BCCP) and then the CO(2) group is transferred by the carboxyltransferase to acetyl-CoA to form malonyl-CoA. The sequence is that of Acetyl-coenzyme A carboxylase carboxyl transferase subunit alpha from Streptococcus pyogenes serotype M2 (strain MGAS10270).